A 22-amino-acid chain; its full sequence is Proline-rich peptide (22 aa).

Positions 1-22 (FVDRNRIPRSNNGPKIPIISNP) are disordered.

It localises to the secreted. Functionally, antibacterial peptide active against Gram-positive bacterium M.luteus and Gram-negative bacterium E.coli. The polypeptide is Proline-rich peptide (Calliphora vicina (Blue blowfly)).